Here is a 140-residue protein sequence, read N- to C-terminus: uncharacterized protein (140 aa).

The N-acetyltransferase domain maps to 2–140 (KAVIAKNEEQ…GIPHLQMMKD (139 aa)).

Belongs to the acetyltransferase family.

This is an uncharacterized protein from Bacillus subtilis (strain 168).